The chain runs to 1241 residues: High-affinity potassium transport protein (1241 aa).

2 consecutive transmembrane segments (helical) span residues 49–70 (NFIA…ILLY) and 78–98 (IDAL…TVDV). The N-linked (GlcNAc...) asparagine glycan is linked to N100. A helical transmembrane segment spans residues 107 to 127 (IILYIICCISTPIAVHSCLAF). Disordered regions lie at residues 162 to 241 (TART…SLDD), 253 to 316 (KYHG…TPED), and 329 to 570 (EGTA…QLQQ). The span at 164-177 (RTMTKSKTGGTQRV) shows a compositional bias: polar residues. Basic and acidic residues-rich tracts occupy residues 181–191 (GKSDKRDDFQE) and 199–214 (VNRD…HNSR). A compositionally biased stretch (low complexity) spans 215 to 238 (DSNSNANTNSSNNNSINHNGSSGS). N-linked (GlcNAc...) asparagine glycans are attached at residues N223, N227, N233, N257, N274, N353, and N364. 2 stretches are compositionally biased toward polar residues: residues 268–280 (NTAT…QKLK) and 345–365 (TDGT…TMNE). Basic and acidic residues predominate over residues 366–375 (SKIRIQDKGA). Polar residues predominate over residues 380-411 (DQDSVLHSSNSSACTSDEDSLPTNFGGTTPSL). Residues N389 and N442 are each glycosylated (N-linked (GlcNAc...) asparagine). Composition is skewed to basic residues over residues 446-455 (PPRKASKSKR) and 482-497 (HLPK…KRRL). The segment covering 498–509 (STGSIDKNSSSD) has biased composition (polar residues). Residues N505 and N538 are each glycosylated (N-linked (GlcNAc...) asparagine). Residues 520–545 (NDDDDGNEGDNMEEYFADNESGDEDD) are compositionally biased toward acidic residues. A compositionally biased stretch (low complexity) spans 561–570 (KQQQQHQLQQ). Residues N584, N660, N681, N691, and N741 are each glycosylated (N-linked (GlcNAc...) asparagine). Positions 677–714 (NSHRNGSEDVSSDSNETTYPLNGNNDHSQNDANGYPTY) are disordered. The segment covering 684–708 (EDVSSDSNETTYPLNGNNDHSQNDA) has biased composition (polar residues). 5 consecutive transmembrane segments (helical) span residues 784–806 (ILVV…WINL), 819–840 (VSPT…GLTL), 844–864 (SMMS…FIII), 868–888 (GFPI…PDLS), and 904–924 (CFTL…LVGL). N925 is a glycosylation site (N-linked (GlcNAc...) asparagine). 2 consecutive transmembrane segments (helical) span residues 929–949 (WILF…SKGY) and 977–997 (SIQV…AISI). The segment at 1011–1073 (YGEMGGKPED…ENENPNEEST (63 aa)) is disordered. A compositionally biased stretch (acidic residues) spans 1021–1041 (TDTEEDGDCDDEDDDNEEEES). Positions 1050–1062 (GKSKKETKKKKKR) are enriched in basic residues. The next 2 membrane-spanning stretches (helical) occupy residues 1084–1104 (QLSF…ICER) and 1117–1137 (VFTI…SLGY). A glycan (N-linked (GlcNAc...) asparagine) is linked at N1141. Residues 1222 to 1241 (DELKHKRSLSRSSKRSTKTN) are disordered. Over residues 1226–1241 (HKRSLSRSSKRSTKTN) the composition is skewed to basic residues.

Belongs to the TrkH potassium transport family.

It localises to the membrane. This protein is required for high-affinity potassium transport. The chain is High-affinity potassium transport protein (TRK1) from Saccharomyces uvarum (Yeast).